The primary structure comprises 343 residues: tRNA N6-adenosine threonylcarbamoyltransferase (343 aa).

Fe cation is bound by residues His-114 and His-118. Substrate is bound by residues 137-141 (LVSGG), Asp-171, Gly-184, Asp-188, and Asn-278. Asp-306 contributes to the Fe cation binding site.

It belongs to the KAE1 / TsaD family. The cofactor is Fe(2+).

It is found in the cytoplasm. It catalyses the reaction L-threonylcarbamoyladenylate + adenosine(37) in tRNA = N(6)-L-threonylcarbamoyladenosine(37) in tRNA + AMP + H(+). In terms of biological role, required for the formation of a threonylcarbamoyl group on adenosine at position 37 (t(6)A37) in tRNAs that read codons beginning with adenine. Is involved in the transfer of the threonylcarbamoyl moiety of threonylcarbamoyl-AMP (TC-AMP) to the N6 group of A37, together with TsaE and TsaB. TsaD likely plays a direct catalytic role in this reaction. This Acidothermus cellulolyticus (strain ATCC 43068 / DSM 8971 / 11B) protein is tRNA N6-adenosine threonylcarbamoyltransferase.